We begin with the raw amino-acid sequence, 143 residues long: Actin-depolymerizing factor (143 aa).

One can recognise an ADF-H domain in the interval 11-143 (GMGVADHSKN…DLEVLRERAH (133 aa)).

It belongs to the actin-binding proteins ADF family.

Actin-depolymerizing protein. Severs actin filaments (F-actin) and binds to actin monomers. The chain is Actin-depolymerizing factor from Vitis vinifera (Grape).